Reading from the N-terminus, the 908-residue chain is MATIHVDGKEYEVNGADNLLQACLSLGLDIPYFCWHPALGSVGACRQCAVKQYQNAEDTRGRLVMSCMTPATDGTFISIDDEEAKQFRESVVEWLMTNHPHDCPVCEEGGNCHLQDMTVMTGHSFRRYRFTKRTHRNQDLGPFISHEMNRCIACYRCVRYYKDYADGTDLGVYGAHDNVYFGRPEDGTLESEFSGNLVEICPTGVFTDKTHSERYNRKWDMQFAPSICQQCSIGCNISPGERYGELRRIENRYNGTVNHYFLCDRGRFGYGYVNLKDRPRQPVQRRGDDFITLNAEQAMQGAADILRQSKKVIGIGSPRASIESNFALRELVGAENFYTGIARGEQERLQLALKVLREGGIYTPALREIESYDAVLVLGEDVTQTGARVALAVRQAVKGKAREMAAAQKVADWQIAAILNIGQRAKHPLFVTNVDDTRLDDIAAWTYRAPVEDQARLGFAIAHALDNTAPAVDGIDSDLQNKIDVIVQALAGAKKPLIISGTNAGSSEVIQAAANVAKALKGRGADVGITMIARSVNSMGLGMMGGGSLDDALGELETGSADAVVVLENDLHRHASATRVNAALAKAPLVMVVDHQRTAIMENAHLVLSAASFAESDGTVINNEGRAQRFFQVYDPAYYDNKTIMLESWRWLHSLHSTVENREVDWTQLDHVIDAVIAAMPQFAGIKDAAPDATFRIRGQKLAREPHRYSGRTAMRANISVHEPRQPQDKDTMFAFSMEGNNQPTAPRSEIPFAWAPGWNSPQAWNKFQDEVGGKLRHGDPGVRLIEATEGGLDYFTTVPASFQAQDGQWRIAPYYHLFGSDELSQRSPVFQSRMPQPYIKLNPADAAKLGVNAGTRVSFSYDGNTVTLPVEISEGLAAGQVGLPMGMPGIAPVLAGARLEDLREAQQ.

The 2Fe-2S ferredoxin-type domain occupies 2–83 (ATIHVDGKEY…GTFISIDDEE (82 aa)). Cysteine 34, cysteine 45, cysteine 48, and cysteine 67 together coordinate [2Fe-2S] cluster. One can recognise a 4Fe-4S His(Cys)3-ligated-type domain in the interval 83–122 (EAKQFRESVVEWLMTNHPHDCPVCEEGGNCHLQDMTVMTG). Residues histidine 99, cysteine 103, cysteine 106, cysteine 112, cysteine 151, cysteine 154, cysteine 157, cysteine 201, cysteine 228, cysteine 231, cysteine 235, and cysteine 263 each contribute to the [4Fe-4S] cluster site. The 4Fe-4S Mo/W bis-MGD-type domain occupies 221-277 (MQFAPSICQQCSIGCNISPGERYGELRRIENRYNGTVNHYFLCDRGRFGYGYVNLKD).

This sequence belongs to the complex I 75 kDa subunit family. Composed of 13 different subunits. Subunits NuoCD, E, F, and G constitute the peripheral sector of the complex. [2Fe-2S] cluster is required as a cofactor. Requires [4Fe-4S] cluster as cofactor.

It carries out the reaction a quinone + NADH + 5 H(+)(in) = a quinol + NAD(+) + 4 H(+)(out). Its function is as follows. NDH-1 shuttles electrons from NADH, via FMN and iron-sulfur (Fe-S) centers, to quinones in the respiratory chain. The immediate electron acceptor for the enzyme in this species is believed to be ubiquinone. Couples the redox reaction to proton translocation (for every two electrons transferred, four hydrogen ions are translocated across the cytoplasmic membrane), and thus conserves the redox energy in a proton gradient. This chain is NADH-quinone oxidoreductase subunit G (nuoG), found in Salmonella typhi.